The following is a 454-amino-acid chain: Isthmin-1 (454 aa).

The signal sequence occupies residues 1 to 29 (MVRLAAELLLLLGLLLLTLHITVLRGSGA). Disordered stretches follow at residues 29-93 (ASDR…PRSF), 125-144 (PDSE…WSLP), and 161-209 (TNSG…STDG). Residues 38–55 (GNNNLNLESDSTSETSFP) are compositionally biased toward polar residues. Positions 128–137 (EAEKDQHPEN) are enriched in basic and acidic residues. The region spanning 208–252 (DGEGDWSLWSVCSVTCGNGNQKRTRSCGYACIATESRTCDRPNCP) is the TSP type-1 domain. 3 disulfides stabilise this stretch: Cys-219/Cys-246, Cys-223/Cys-251, and Cys-234/Cys-238. Residues 279-442 (LFEVDMDSCE…QKCTESPSDE (164 aa)) form the AMOP domain.

This sequence belongs to the isthmin family. In terms of assembly, interacts with integrin ITGAV/ITGB5.

It is found in the secreted. Functionally, acts as an angiogenesis inhibitor. The protein is Isthmin-1 (Ism1) of Mus musculus (Mouse).